The sequence spans 145 residues: MASKSSISPLLLATVLVSVFAAATATGPYCYAGMGLPINPLEGCREYVAQQTCGISISGSAVSTEPGNTPRDRCCKELYDASQHCRCEAVRYFIGRRSDPNSSVLKDLPGCPREPQRDFAKVLVTSGHCNVMTVHNAPYCLGLDI.

An N-terminal signal peptide occupies residues Met1–Ala25.

It belongs to the protease inhibitor I6 (cereal trypsin/alpha-amylase inhibitor) family. Subunit of the tetrameric inhibitor. Endosperm.

The protein localises to the secreted. Alpha-amylase/trypsin inhibitor. It could be involved in insect defense mechanisms. This chain is Alpha-amylase/trypsin inhibitor CM1, found in Triticum aestivum (Wheat).